A 292-amino-acid chain; its full sequence is Cyclin-dependent kinase 5 (292 aa).

One can recognise a Protein kinase domain in the interval Tyr4 to Phe286. ATP contacts are provided by residues Ile10–Val18 and Lys33. Tyr15 carries the post-translational modification Phosphotyrosine; by ABL1, EPHA4 and FYN. Thr17 carries the phosphothreonine modification. Lys56 is subject to N6-acetyllysine. Ser72 is subject to Phosphoserine. Asp126 serves as the catalytic Proton acceptor. A Phosphoserine modification is found at Ser159.

The protein belongs to the protein kinase superfamily. CMGC Ser/Thr protein kinase family. CDC2/CDKX subfamily. In terms of assembly, heterodimer composed of a catalytic subunit CDK5 and a regulatory subunit CDK5R1 (p25) and macromolecular complex composed of at least CDK5, CDK5R1 (p35) and CDK5RAP1 or CDK5RAP2 or CDK5RAP3. Only the heterodimer shows kinase activity. Under neurotoxic stress and neuronal injury conditions, p35 is cleaved by calpain to generate p25 that hyperactivates CDK5, that becomes functionally disabled and often toxic. Found in a trimolecular complex with CABLES1 and ABL1. Interacts with CABLES1 and CABLES2. Interacts with AATK and GSTP1. Binds to HDAC1 when in complex with p25. Interaction with myristoylation p35 promotes CDK5 association with membranes. Both isoforms 1 and 2 interacts with beta-catenin/CTNNB1. Interacts with delta-catenin/CTNND2 and APEX1. Interacts with P53/TP53 in neurons. Interacts with EPHA4; may mediate the activation of NGEF by EPHA4. Interacts with PTK2/FAK1. The complex p35/CDK5 interacts with CLOCK. Interacts with HTR6. In terms of processing, phosphorylation on Tyr-15 by ABL1 and FYN, and on Ser-159 by casein kinase 1 promotes kinase activity. By contrast, phosphorylation at Thr-14 inhibits activity. Post-translationally, phosphorylation at Ser-159 is essential for maximal catalytic activity. In terms of tissue distribution, ubiquitously expressed. Accumulates in cortical neurons (at protein level). Expressed in the testis, skeletal muscle, colon, bone marrow and ovary.

It localises to the cytoplasm. The protein localises to the nucleus. It is found in the cell membrane. The protein resides in the perikaryon. Its subcellular location is the cell projection. It localises to the lamellipodium. The protein localises to the growth cone. It is found in the postsynaptic density. The protein resides in the synapse. The catalysed reaction is L-seryl-[protein] + ATP = O-phospho-L-seryl-[protein] + ADP + H(+). The enzyme catalyses L-threonyl-[protein] + ATP = O-phospho-L-threonyl-[protein] + ADP + H(+). With respect to regulation, inhibited by 2-(1-ethyl-2-hydroxyethylamino)-6-benzylamino-9-isopropylpurine (roscovitine), 1-isopropyl-4-aminobenzyl-6-ether-linked benzimidazoles, resveratrol, AT-7519 and olomoucine. Activated by CDK5R1 (p35) and CDK5R2 (p39) during the development of the nervous system; degradation of CDK5R1 (p35) and CDK5R2 (p39) by proteasome result in down regulation of kinase activity, during this process, CDK5 phosphorylates p35 and induces its ubiquitination and subsequent degradation. Kinase activity is mainly determined by the amount of p35 available and subcellular location; reversible association to plasma membrane inhibits activity. Long-term inactivation as well as CDK5R1 (p25)-mediated hyperactivation of CDK5 triggers cell death. The pro-death activity of hyperactivated CDK5 is suppressed by membrane association of CDK5, via myristoylation of p35. Brain-derived neurotrophic factor, glial-derived neurotrophic factor, nerve growth factor (NGF), retinoic acid, laminin and neuregulin promote activity. Neurotoxicity enhances nuclear activity, thus leading to MEF2 phosphorylation and inhibition prior to apoptosis of cortical neurons. Repression by GSTP1 via p25/p35 translocation prevents neurodegeneration. Functionally, proline-directed serine/threonine-protein kinase essential for neuronal cell cycle arrest and differentiation and may be involved in apoptotic cell death in neuronal diseases by triggering abortive cell cycle re-entry. Interacts with D1 and D3-type G1 cyclins. Phosphorylates SRC, NOS3, VIM/vimentin, p35/CDK5R1, MEF2A, SIPA1L1, SH3GLB1, PXN, PAK1, MCAM/MUC18, SEPT5, SYN1, DNM1, AMPH, SYNJ1, CDK16, RAC1, RHOA, CDC42, TONEBP/NFAT5, MAPT/TAU, MAP1B, histone H1, p53/TP53, HDAC1, APEX1, PTK2/FAK1, huntingtin/HTT, ATM, MAP2, NEFH and NEFM. Regulates several neuronal development and physiological processes including neuronal survival, migration and differentiation, axonal and neurite growth, synaptogenesis, oligodendrocyte differentiation, synaptic plasticity and neurotransmission, by phosphorylating key proteins. Negatively regulates the CACNA1B/CAV2.2 -mediated Ca(2+) release probability at hippocampal neuronal soma and synaptic terminals. Activated by interaction with CDK5R1 (p35) and CDK5R2 (p39), especially in postmitotic neurons, and promotes CDK5R1 (p35) expression in an autostimulation loop. Phosphorylates many downstream substrates such as Rho and Ras family small GTPases (e.g. PAK1, RAC1, RHOA, CDC42) or microtubule-binding proteins (e.g. MAPT/TAU, MAP2, MAP1B), and modulates actin dynamics to regulate neurite growth and/or spine morphogenesis. Also phosphorylates exocytosis associated proteins such as MCAM/MUC18, SEPT5, SYN1, and CDK16/PCTAIRE1 as well as endocytosis associated proteins such as DNM1, AMPH and SYNJ1 at synaptic terminals. In the mature central nervous system (CNS), regulates neurotransmitter movements by phosphorylating substrates associated with neurotransmitter release and synapse plasticity; synaptic vesicle exocytosis, vesicles fusion with the presynaptic membrane, and endocytosis. Promotes cell survival by activating anti-apoptotic proteins BCL2 and STAT3, and negatively regulating of JNK3/MAPK10 activity. Phosphorylation of p53/TP53 in response to genotoxic and oxidative stresses enhances its stabilization by preventing ubiquitin ligase-mediated proteasomal degradation, and induces transactivation of p53/TP53 target genes, thus regulating apoptosis. Phosphorylation of p35/CDK5R1 enhances its stabilization by preventing calpain-mediated proteolysis producing p25/CDK5R1 and avoiding ubiquitin ligase-mediated proteasomal degradation. During aberrant cell-cycle activity and DNA damage, p25/CDK5 activity elicits cell-cycle activity and double-strand DNA breaks that precedes neuronal death by deregulating HDAC1. DNA damage triggered phosphorylation of huntingtin/HTT in nuclei of neurons protects neurons against polyglutamine expansion as well as DNA damage mediated toxicity. Phosphorylation of PXN reduces its interaction with PTK2/FAK1 in matrix-cell focal adhesions (MCFA) during oligodendrocytes (OLs) differentiation. Negative regulator of Wnt/beta-catenin signaling pathway. Activator of the GAIT (IFN-gamma-activated inhibitor of translation) pathway, which suppresses expression of a post-transcriptional regulon of proinflammatory genes in myeloid cells; phosphorylates the linker domain of glutamyl-prolyl tRNA synthetase (EPRS) in a IFN-gamma-dependent manner, the initial event in assembly of the GAIT complex. Phosphorylation of SH3GLB1 is required for autophagy induction in starved neurons. Phosphorylation of TONEBP/NFAT5 in response to osmotic stress mediates its rapid nuclear localization. MEF2 is inactivated by phosphorylation in nucleus in response to neurotoxin, thus leading to neuronal apoptosis. APEX1 AP-endodeoxyribonuclease is repressed by phosphorylation, resulting in accumulation of DNA damage and contributing to neuronal death. NOS3 phosphorylation down regulates NOS3-derived nitrite (NO) levels. SRC phosphorylation mediates its ubiquitin-dependent degradation and thus leads to cytoskeletal reorganization. May regulate endothelial cell migration and angiogenesis via the modulation of lamellipodia formation. Involved in dendritic spine morphogenesis by mediating the EFNA1-EPHA4 signaling. The complex p35/CDK5 participates in the regulation of the circadian clock by modulating the function of CLOCK protein: phosphorylates CLOCK at 'Thr-451' and 'Thr-461' and regulates the transcriptional activity of the CLOCK-BMAL1 heterodimer in association with altered stability and subcellular distribution. The chain is Cyclin-dependent kinase 5 from Homo sapiens (Human).